We begin with the raw amino-acid sequence, 635 residues long: Threonine--tRNA ligase (635 aa).

The TGS domain occupies 1–61; that stretch reads MIKITLKDGS…ENDCTLNLLT (61 aa). Residues 242–532 form a catalytic region; it reads DHRKLGRELD…LTEHYAGAFP (291 aa). Cysteine 333, histidine 384, and histidine 509 together coordinate Zn(2+).

This sequence belongs to the class-II aminoacyl-tRNA synthetase family. In terms of assembly, homodimer. Requires Zn(2+) as cofactor.

The protein localises to the cytoplasm. The enzyme catalyses tRNA(Thr) + L-threonine + ATP = L-threonyl-tRNA(Thr) + AMP + diphosphate + H(+). Its function is as follows. Catalyzes the attachment of threonine to tRNA(Thr) in a two-step reaction: L-threonine is first activated by ATP to form Thr-AMP and then transferred to the acceptor end of tRNA(Thr). Also edits incorrectly charged L-seryl-tRNA(Thr). This chain is Threonine--tRNA ligase, found in Acetivibrio thermocellus (strain ATCC 27405 / DSM 1237 / JCM 9322 / NBRC 103400 / NCIMB 10682 / NRRL B-4536 / VPI 7372) (Clostridium thermocellum).